The chain runs to 393 residues: Lipid-A-disaccharide synthase (393 aa).

The protein belongs to the LpxB family.

It catalyses the reaction a lipid X + a UDP-2-N,3-O-bis[(3R)-3-hydroxyacyl]-alpha-D-glucosamine = a lipid A disaccharide + UDP + H(+). It functions in the pathway bacterial outer membrane biogenesis; LPS lipid A biosynthesis. Condensation of UDP-2,3-diacylglucosamine and 2,3-diacylglucosamine-1-phosphate to form lipid A disaccharide, a precursor of lipid A, a phosphorylated glycolipid that anchors the lipopolysaccharide to the outer membrane of the cell. This Actinobacillus pleuropneumoniae serotype 3 (strain JL03) protein is Lipid-A-disaccharide synthase.